Reading from the N-terminus, the 344-residue chain is Phenylalanine--tRNA ligase alpha subunit (344 aa).

A Mg(2+)-binding site is contributed by glutamate 259.

This sequence belongs to the class-II aminoacyl-tRNA synthetase family. Phe-tRNA synthetase alpha subunit type 1 subfamily. As to quaternary structure, tetramer of two alpha and two beta subunits. Requires Mg(2+) as cofactor.

It is found in the cytoplasm. It carries out the reaction tRNA(Phe) + L-phenylalanine + ATP = L-phenylalanyl-tRNA(Phe) + AMP + diphosphate + H(+). The chain is Phenylalanine--tRNA ligase alpha subunit from Petrotoga mobilis (strain DSM 10674 / SJ95).